We begin with the raw amino-acid sequence, 439 residues long: Adenylosuccinate synthetase (439 aa).

Residues 25 to 31, 53 to 55, and Lys-62 each bind GTP; these read GDEGKGK and GHT. Asp-26 (proton acceptor) is an active-site residue. Mg(2+) is bound by residues Asp-26 and Gly-53. IMP contacts are provided by residues 26 to 29 and 51 to 54; these read DEGK and NAGH. The active-site Proton donor is the His-54. IMP contacts are provided by Thr-141, Arg-155, Asn-232, and Thr-247. A GTP-binding site is contributed by Thr-307. 307–313 serves as a coordination point for substrate; the sequence is TTTKRPR. An IMP-binding site is contributed by Arg-311. Residues Arg-313, 339–341, and 425–427 each bind GTP; these read KLD and GVG.

It belongs to the adenylosuccinate synthetase family. As to quaternary structure, homodimer. It depends on Mg(2+) as a cofactor.

Its subcellular location is the cytoplasm. The catalysed reaction is IMP + L-aspartate + GTP = N(6)-(1,2-dicarboxyethyl)-AMP + GDP + phosphate + 2 H(+). The protein operates within purine metabolism; AMP biosynthesis via de novo pathway; AMP from IMP: step 1/2. Plays an important role in the salvage pathway for purine nucleotide biosynthesis. Catalyzes the first commited step in the biosynthesis of AMP from IMP. This chain is Adenylosuccinate synthetase (ADSS), found in Plasmodium berghei (strain Anka).